We begin with the raw amino-acid sequence, 319 residues long: MTDASGSERLKRAKGISEGTPSSLPDHLIRATAAEGKIRVVGLVATQAVQEARERHKLSYVATVALGRAMSAALLLAANLKRRQARINLQLKGNGPLGNIWVDAGLDGTVRGYVSNPAIELPLTAESKLDVGQAVGRYGYLHVLRDLGYGQPYTSAVELVSGEVGDDITYYLSSSEQIPSAVLLGVNLDSQRVRAAGGVLLQLMPGAPASLIPEMEARLAKVEEFSPMLACGGGLRELLQLCLGDLDLKIAPEMRTIRFYCKCNSDRVKGALRMLGRDELLDMIHTDKGAEAVCQFCNEVYRISEDELRSIVAEMSATP.

Positions 1-10 (MTDASGSERL) are enriched in basic and acidic residues. The interval 1–25 (MTDASGSERLKRAKGISEGTPSSLP) is disordered. Intrachain disulfides connect C261-C263 and C294-C297.

This sequence belongs to the HSP33 family. In terms of processing, under oxidizing conditions two disulfide bonds are formed involving the reactive cysteines. Under reducing conditions zinc is bound to the reactive cysteines and the protein is inactive.

Its subcellular location is the cytoplasm. Its function is as follows. Redox regulated molecular chaperone. Protects both thermally unfolding and oxidatively damaged proteins from irreversible aggregation. Plays an important role in the bacterial defense system toward oxidative stress. The polypeptide is 33 kDa chaperonin (Synechococcus sp. (strain JA-2-3B'a(2-13)) (Cyanobacteria bacterium Yellowstone B-Prime)).